A 414-amino-acid polypeptide reads, in one-letter code: Carboxynorspermidine synthase (414 aa).

This sequence belongs to the saccharopine dehydrogenase family. Carboxynorspermidine synthase subfamily.

It carries out the reaction carboxynorspermidine + NADP(+) + H2O = L-aspartate 4-semialdehyde + propane-1,3-diamine + NADPH + H(+). The enzyme catalyses carboxyspermidine + NADP(+) + H2O = L-aspartate 4-semialdehyde + putrescine + NADPH + H(+). Functionally, involved in norspermidine biosynthesis. Catalyzes the synthesis of carboxynorspermidine from L-aspartate 4-semialdehyde and 1,3-diaminopropane. Is also active with putrescine as a substrate. Essential for biofilm formation. The protein is Carboxynorspermidine synthase of Vibrio cholerae serotype O1 (strain ATCC 39315 / El Tor Inaba N16961).